The chain runs to 500 residues: L-arabinose isomerase (500 aa).

Glu306, Glu333, His350, and His450 together coordinate Mn(2+).

Belongs to the arabinose isomerase family. In terms of assembly, homohexamer. Mn(2+) is required as a cofactor.

It carries out the reaction beta-L-arabinopyranose = L-ribulose. The protein operates within carbohydrate degradation; L-arabinose degradation via L-ribulose; D-xylulose 5-phosphate from L-arabinose (bacterial route): step 1/3. Catalyzes the conversion of L-arabinose to L-ribulose. The sequence is that of L-arabinose isomerase from Enterobacter sp. (strain 638).